Reading from the N-terminus, the 156-residue chain is MPTEIENINPNVYDRIKERVLTANEEDENVPDPFDKREIFDLIRNINDPEHPLTLEELHVVQEDLIRINDSQNSVHISFTPTIPHCSMATLIGLSIRVKLLRSLPPRFKVTVEITPGTHASELAVNKQLADKERVAAALENNHLAEVINQCIAAKG.

This sequence belongs to the MIP18 family. As to quaternary structure, component of the CGX complex composed of crb, galla (galla-1 or galla-2) and Xpd. Interacts with crb (via intracellular domain). Also able to interact with Xpd in the absence of crb. Interacts with Mms19.

Functionally, component of the crb-galla-Xpd (CGX) complex which is essential for proper mitotic chromosome segregation in early embryos. The CGX complex is also required for cell proliferation in developing wing disks. In the CGX complex, acts with crb to recruit Xpd thus forming the functional complex. This is MIP18 family protein galla-2 from Drosophila melanogaster (Fruit fly).